The sequence spans 914 residues: Alanine--tRNA ligase (914 aa).

Zn(2+)-binding residues include histidine 613, histidine 617, cysteine 717, and histidine 721.

This sequence belongs to the class-II aminoacyl-tRNA synthetase family. The cofactor is Zn(2+).

It localises to the cytoplasm. It catalyses the reaction tRNA(Ala) + L-alanine + ATP = L-alanyl-tRNA(Ala) + AMP + diphosphate. Its function is as follows. Catalyzes the attachment of alanine to tRNA(Ala) in a two-step reaction: alanine is first activated by ATP to form Ala-AMP and then transferred to the acceptor end of tRNA(Ala). Also edits incorrectly charged Ser-tRNA(Ala) and Gly-tRNA(Ala) via its editing domain. This Pyrococcus furiosus (strain ATCC 43587 / DSM 3638 / JCM 8422 / Vc1) protein is Alanine--tRNA ligase.